The sequence spans 63 residues: Synergistic-type venom protein C9S3, chain 1 (63 aa).

3 disulfide bridges follow: cysteine 3–cysteine 24, cysteine 17–cysteine 42, and cysteine 46–cysteine 57.

Belongs to the three-finger toxin family. Short-chain subfamily. Aminergic toxin sub-subfamily. Heterodimer of C9S3 chain 1 and chain 2 (AC P01409); disulfide-linked. Expressed by the venom gland.

Its subcellular location is the secreted. This protein shows a synergetic toxic effect in that it enhances the toxicity of other toxins. This chain is Synergistic-type venom protein C9S3, chain 1, found in Dendroaspis angusticeps (Eastern green mamba).